The chain runs to 109 residues: MLLLPLLLLAGRFPGGDNEDALQGPTSYHVMQISSFTNSTWTENRGSGWLEDLQIHRWDSETGTAIFLKPWSKGNLSDEEITELVELFRVYFFGLVRELRDHVTEFQMK.

The first 18 residues, 1–18 (MLLLPLLLLAGRFPGGDN), serve as a signal peptide directing secretion. Asparagine 38 and asparagine 75 each carry an N-linked (GlcNAc...) asparagine glycan.

Heterodimer with B2M (beta-2-microglobulin). Interacts with saposin C. In terms of tissue distribution, expressed on cortical thymocytes, on certain T-cell leukemias, and in various other tissues.

It is found in the cell membrane. The protein localises to the endosome membrane. It localises to the lysosome membrane. In terms of biological role, antigen-presenting protein that binds self and non-self lipid and glycolipid antigens and presents them to T-cell receptors on natural killer T-cells. The chain is T-cell surface glycoprotein CD1b (CD1B) from Oryctolagus cuniculus (Rabbit).